The primary structure comprises 677 residues: Methionine--tRNA ligase (677 aa).

The 'HIGH' region motif lies at 14 to 24 (PYANGAIHLGH). Zn(2+) is bound by residues C145, C148, C158, and C161. Residues 330-334 (KMSKS) carry the 'KMSKS' region motif. Position 333 (K333) interacts with ATP. A tRNA-binding domain is found at 576-677 (DFAKVDLRVA…EGALPGMRVM (102 aa)).

The protein belongs to the class-I aminoacyl-tRNA synthetase family. MetG type 1 subfamily. In terms of assembly, homodimer. Zn(2+) serves as cofactor.

It is found in the cytoplasm. It carries out the reaction tRNA(Met) + L-methionine + ATP = L-methionyl-tRNA(Met) + AMP + diphosphate. Is required not only for elongation of protein synthesis but also for the initiation of all mRNA translation through initiator tRNA(fMet) aminoacylation. The protein is Methionine--tRNA ligase of Saccharophagus degradans (strain 2-40 / ATCC 43961 / DSM 17024).